We begin with the raw amino-acid sequence, 92 residues long: MKFEAVVRTEQGKGASRRLRHAGKFPAIVYGGTEAPVSIALDHDAVINQMDKPAFYEAIELVIDGAAVKVKPQDVQRHAFKPKVEHMDFIRI.

It belongs to the bacterial ribosomal protein bL25 family. In terms of assembly, part of the 50S ribosomal subunit; part of the 5S rRNA/L5/L18/L25 subcomplex. Contacts the 5S rRNA. Binds to the 5S rRNA independently of L5 and L18.

In terms of biological role, this is one of the proteins that binds to the 5S RNA in the ribosome where it forms part of the central protuberance. In Aliivibrio fischeri (strain ATCC 700601 / ES114) (Vibrio fischeri), this protein is Large ribosomal subunit protein bL25.